The chain runs to 649 residues: Protein phosphatase Slingshot homolog 3 (649 aa).

A compositionally biased stretch (polar residues) spans 1-20 (MALVTVSRSPPASGHSTPVG). Residues 1–32 (MALVTVSRSPPASGHSTPVGPTQDRVVRRRGR) form a disordered region. Position 2 is an N-acetylalanine (Ala-2). Phosphoserine occurs at positions 9 and 38. The tract at residues 49–90 (LQDGGDSNVASEADSEPMEEPSGEEQPTEDQTDKGQGLQSPW) is disordered. Over residues 61–78 (ADSEPMEEPSGEEQPTED) the composition is skewed to acidic residues. Residue Ser-88 is modified to Phosphoserine. The region spanning 266–321 (EKMEQAILAELWQVLDTSDLDSVTSKEIRQALELRLGCPLQQYRDFIDNQMLLLMA) is the DEK-C domain. The region spanning 325-466 (RASRIFPHLY…LRTYQGILTA (142 aa)) is the Tyrosine-protein phosphatase domain. Cys-410 functions as the Phosphocysteine intermediate in the catalytic mechanism. Composition is skewed to low complexity over residues 541-551 (LEPSESESTPE) and 608-627 (TRAF…GMSS). 2 disordered regions span residues 541–586 (LEPS…KGPW) and 608–649 (TRAF…EDKA). Positions 639-649 (SVDDSREEDKA) are enriched in basic and acidic residues.

Belongs to the protein-tyrosine phosphatase family. In terms of assembly, does not bind to, or colocalize with, filamentous actin. Expressed in brain, small intestine and testis. Also expressed at lower levels in heart, kidney, liver, spleen and thymus.

It localises to the cytoplasm. The protein resides in the cytoskeleton. The protein localises to the nucleus. It carries out the reaction O-phospho-L-tyrosyl-[protein] + H2O = L-tyrosyl-[protein] + phosphate. The enzyme catalyses O-phospho-L-seryl-[protein] + H2O = L-seryl-[protein] + phosphate. It catalyses the reaction O-phospho-L-threonyl-[protein] + H2O = L-threonyl-[protein] + phosphate. Protein phosphatase which may play a role in the regulation of actin filament dynamics. Can dephosphorylate and activate the actin binding/depolymerizing factor cofilin, which subsequently binds to actin filaments and stimulates their disassembly. This Mus musculus (Mouse) protein is Protein phosphatase Slingshot homolog 3 (Ssh3).